Here is a 260-residue protein sequence, read N- to C-terminus: Mitochondrial import inner membrane translocase subunit Tim29 (260 aa).

The transit peptide at 1-31 (MAAAALRRFWSRRRAEAGDAVVAKPGVWARL) directs the protein to the mitochondrion. At 32 to 59 (GSWARALLRDYAEACRDASAEARARPGR) the chain is on the mitochondrial matrix side. Residues 60–77 (AAVYVGLLGGAAACFTLA) traverse the membrane as a helical segment. The Mitochondrial intermembrane portion of the chain corresponds to 78–260 (PSEGAFEEAL…HSLVQAEAPR (183 aa)).

Component of the TIM22 complex, which core is composed of TIMM22, associated with TIMM10 (TIMM10A and/or TIMM10B), TIMM9, AGK and TIMM29. Interacts with TIMM10B; the interaction is direct. Interacts with TOMM40; linking the TIM22 complex to the TOM complex. Interacts with TIMM22 (when oxidized); the interaction is direct.

Its subcellular location is the mitochondrion inner membrane. Functionally, component of the TIM22 complex, a complex that mediates the import and insertion of multi-pass transmembrane proteins into the mitochondrial inner membrane. The TIM22 complex forms a twin-pore translocase that uses the membrane potential as the external driving force. Required for the stability of the TIM22 complex and functions in the assembly of the TIMM22 protein into the TIM22 complex. May facilitate cooperation between TIM22 and TOM complexes by interacting with TOMM40. The chain is Mitochondrial import inner membrane translocase subunit Tim29 from Homo sapiens (Human).